A 30-amino-acid polypeptide reads, in one-letter code: U5-ctenitoxin-Pk1b (30 aa).

Disulfide bonds link C6–C23 and C13–C29.

The protein belongs to the neurotoxin 04 (omega-agtx) family. 02 (Tx1) subfamily. As to expression, expressed by the venom gland.

The protein localises to the secreted. Lethal neurotoxin. Causes spastic paralysis and death in mice in 4-6 minutes after intracerebroventricular injection at dose levels of 1.5 ug per mouse. The protein is U5-ctenitoxin-Pk1b of Phoneutria keyserlingi (Brazilian wandering spider).